We begin with the raw amino-acid sequence, 385 residues long: SH3 domain-binding protein 5-like (385 aa).

The tract at residues 1-58 (MAELRQIPGGRETPQGELRPEVVEDEVPRSPVAEEPGGGGSNSSEAKLSPREEEELDP) is disordered. Thr-13 carries the phosphothreonine modification. Basic and acidic residues predominate over residues 18 to 28 (LRPEVVEDEVP). A phosphoserine mark is found at Ser-30 and Ser-49. 2 coiled-coil regions span residues 59 to 140 (RIQE…YERA) and 169 to 272 (WQEM…EQIH). The segment at 272 to 328 (HARRRGQPAHTPGQRRSSPVGAEAGPDGGEDADSGIIEGAEGGGLEEGVSLGPGAAP) is disordered. Residues 318–328 (EGVSLGPGAAP) show a composition bias toward low complexity. Ser-343, Ser-350, Ser-358, and Ser-362 each carry phosphoserine. The disordered stretch occupies residues 359–385 (DHTSLDGQELGPRSGGRGGRHQRSISL). Positions 376-385 (GGRHQRSISL) are enriched in basic residues.

This sequence belongs to the SH3BP5 family.

In terms of biological role, functions as a guanine nucleotide exchange factor (GEF) for RAB11A. The sequence is that of SH3 domain-binding protein 5-like (SH3BP5L) from Bos taurus (Bovine).